Reading from the N-terminus, the 73-residue chain is Large ribosomal subunit protein bL27c (73 aa).

The protein belongs to the bacterial ribosomal protein bL27 family.

Its subcellular location is the plastid. The protein localises to the chloroplast. This chain is Large ribosomal subunit protein bL27c (rpl27), found in Haptolina hirta (Plankton alga).